We begin with the raw amino-acid sequence, 599 residues long: Kelch repeat and BTB domain-containing protein 8 (599 aa).

Residues 1 to 25 form a disordered region; that stretch reads MAASADLSKSSPTPNGIPSSDTAND. Residues 7–25 are compositionally biased toward polar residues; the sequence is LSKSSPTPNGIPSSDTAND. Residues 49–117 enclose the BTB domain; that stretch reads TDIVVEVDHG…AYTSRVILTE (69 aa). The region spanning 152–254 is the BACK domain; that stretch reads SIGVFIFADH…MEDTFIEKIP (103 aa). Kelch repeat units follow at residues 334-388, 389-439, 441-479, 481-530, and 540-586; these read DIYI…YCCG, KMYA…EHKE, IYVLQGEFFLFYEPQKDYWGFLTPMTVPRIQGLAAVYKD, IYYI…LFQN, and QVTV…FECA.

This sequence belongs to the KBTBD8 family. Component of the BCR(KBTBD8) E3 ubiquitin ligase complex, at least composed of CUL3, KBTBD8 and RBX1.

It is found in the cytoplasm. The protein localises to the cytoskeleton. Its subcellular location is the spindle. The protein resides in the golgi apparatus. Its function is as follows. Substrate-specific adapter of a BCR (BTB-CUL3-RBX1) E3 ubiquitin ligase complex that acts as a regulator of neural crest specification. The BCR(KBTBD8) complex acts by mediating monoubiquitination of NOLC1 and TCOF1: monoubiquitination promotes the formation of a NOLC1-TCOF1 complex that acts as a platform to connect RNA polymerase I with enzymes responsible for ribosomal processing and modification, leading to remodel the translational program of differentiating cells in favor of neural crest specification. The sequence is that of Kelch repeat and BTB domain-containing protein 8 (Kbtbd8) from Mus musculus (Mouse).